The primary structure comprises 1641 residues: Lysine-specific demethylase 6B (1641 aa).

4 disordered regions span residues 42-89 (LPGG…LHGK), 188-682 (YGAK…PLED), 704-808 (LDES…LLKS), and 824-1085 (GAAV…VSRA). Residues 214-223 (LSGPSGEEGL) are compositionally biased toward low complexity. Serine 224 carries the phosphoserine modification. A compositionally biased stretch (pro residues) spans 242 to 268 (PGLPLPPPPPPPPPPPPPPPPPPPPLP). Positions 293 to 309 (GPERKGSAPPERQEQRH) are enriched in basic and acidic residues. The segment covering 312 to 326 (PHSYPYPAPAYSAHP) has biased composition (low complexity). Over residues 361–372 (DLRESRVQRSRM) the composition is skewed to basic and acidic residues. Low complexity predominate over residues 396-415 (PGTSSSSSSSSSSNNTGLRG). Over residues 467–488 (PGTPSSPPPPCPRLLRPPPPPA) the composition is skewed to pro residues. The span at 552 to 568 (TTTSSSSSSNSHSSSPT) shows a compositional bias: low complexity. 2 stretches are compositionally biased toward pro residues: residues 597–613 (QDPP…PAPP) and 645–660 (GPPP…PVPP). Over residues 704–713 (LDESIRKEEE) the composition is skewed to basic and acidic residues. Positions 743 to 766 (TAPATTTAAPTTATTTTTTTTTTT) are enriched in low complexity. Residues 774 to 801 (PPALPPPPPLAKFPPPPQPQPPPPPPAS) show a composition bias toward pro residues. The segment covering 855-879 (VAPSAQGSPKPSVSSSSQFSTSGGP) has biased composition (low complexity). The segment covering 891–908 (APGPVTPAQLPPPLPLPP) has biased composition (pro residues). The span at 918-931 (EISRACETLVERVG) shows a compositional bias: basic and acidic residues. The segment covering 974–987 (GKRRQKEHRRHRRA) has biased composition (basic residues). The segment covering 988 to 1001 (CRDSVGRRPREGRA) has biased composition (basic and acidic residues). Over residues 1002 to 1014 (KAKAKAPKEKSRR) the composition is skewed to basic residues. Residues 1047–1066 (APAPPPAPAPAAQPTPPSAP) are compositionally biased toward pro residues. Lysine 1107 is covalently cross-linked (Glycyl lysine isopeptide (Lys-Gly) (interchain with G-Cter in SUMO2)). The interval 1286-1323 (FQESLQEERESEDEESEEPDSTTGTSPSSAPDPKNHHI) is disordered. A compositionally biased stretch (acidic residues) spans 1294–1305 (RESEDEESEEPD). Residues 1306-1317 (STTGTSPSSAPD) are compositionally biased toward low complexity. One can recognise a JmjC domain in the interval 1337 to 1500 (RWKPQLQELL…YQLALERYEW (164 aa)). Fe cation contacts are provided by histidine 1388, glutamate 1390, and histidine 1468. 4 residues coordinate Zn(2+): cysteine 1573, cysteine 1576, cysteine 1600, and cysteine 1603.

It belongs to the UTX family. In terms of assembly, interacts with TLE1. Component of the MLL4 complex, at least composed of KMT2B/MLL4, ASH2L, RBBP5, WDR5, and KDM6B. Interacts with TBX21, SMARCA4, SMARCC1 and SMARCC2. The cofactor is L-ascorbate. Fe(2+) is required as a cofactor.

Its subcellular location is the nucleus. It carries out the reaction N(6),N(6),N(6)-trimethyl-L-lysyl(27)-[histone H3] + 2 2-oxoglutarate + 2 O2 = N(6)-methyl-L-lysyl(27)-[histone H3] + 2 formaldehyde + 2 succinate + 2 CO2. Histone demethylase that specifically demethylates 'Lys-27' of histone H3, thereby playing a central role in histone code. Demethylates trimethylated and dimethylated H3 'Lys-27'. Plays a central role in regulation of posterior development, by regulating HOX gene expression. Involved in inflammatory response by participating in macrophage differentiation in case of inflammation by regulating gene expression and macrophage differentiation. Plays a demethylase-independent role in chromatin remodeling to regulate T-box family member-dependent gene expression by acting as a link between T-box factors and the SMARCA4-containing SWI/SNF remodeling complex. In Mus musculus (Mouse), this protein is Lysine-specific demethylase 6B (Kdm6b).